A 493-amino-acid polypeptide reads, in one-letter code: Protein translocase subunit SecY (493 aa).

The Cytoplasmic portion of the chain corresponds to 1–21; sequence MDSVIRALQPYFERIPSVERP. Residues 22-48 form a helical membrane-spanning segment; that stretch reads KGHVHFREKFGWTAAILLLYFILSNVP. The Extracellular portion of the chain corresponds to 49–59; that stretch reads VFGLSPESIDI. The segment at residues 60–67 is an intramembrane region (helical); sequence FAAYRALF. Residues 60–88 form a discontinuously helical membrane-spanning segment; that stretch reads FAAYRALFAGSTGSIIALGIGPIVTASII. Residues 68–79 lie within the membrane without spanning it; the sequence is AGSTGSIIALGI. The segment at residues 80–88 is an intramembrane region (helical); the sequence is GPIVTASII. At 89–109 the chain is on the cytoplasmic side; that stretch reads LQLLVGAGIIKLDLTNPEDRA. The helical transmembrane segment at 110–134 threads the bilayer; the sequence is AYQDFQRFLVFVMIAVEAIPQIAGG. Residues 135–151 lie on the Extracellular side of the membrane; it reads LLKPDLNLAAQLGVSPG. Residues 152–176 traverse the membrane as a helical segment; that stretch reads IISFLIFIQLFIGGVLIVYMDEVVS. Over 177-182 the chain is Cytoplasmic; that stretch reads KWGIGS. The chain crosses the membrane as a helical span at residues 183–201; the sequence is GVSLFILAGIAQSIVVGLF. The Extracellular segment spans residues 202–244; sequence NWVIPPNSAMPAGIIPRWIWIAQNYPLDQLFTGSGLAFLLIQG. Residues 245 to 266 form a helical membrane-spanning segment; it reads GILALITTAAIILLVVFFEGTR. Topologically, residues 267-291 are cytoplasmic; that stretch reads VEIPLAHAVARGARGRFPIKLIYAS. Residues 292-313 traverse the membrane as a helical segment; the sequence is VLPMIFVRALQANVVALGQVLH. At 314 to 367 the chain is on the extracellular side; it reads ARGVTIFGEFVNGKAVSGLMFFLQPVSSPYDWIPSLVKSQGAAFAAIPDWMIYL. The chain crosses the membrane as a helical span at residues 368 to 387; it reads HLLIDALILVVGGIIFAWFW. The Cytoplasmic segment spans residues 388 to 430; the sequence is VETSGMDARTVASQIAKSGMQVPGFRKSPQVLERVLSRYIPKV. Residues 431-449 traverse the membrane as a helical segment; the sequence is TILGGAIIGILTLVANMLG. The Extracellular portion of the chain corresponds to 450–454; sequence TIGNV. Residues 455 to 469 form a helical membrane-spanning segment; that stretch reads SGTGLLLAVSIAYRF. The Cytoplasmic segment spans residues 470–493; it reads YEDLAKEQLTEMHPLIRRMLGEEA.

This sequence belongs to the SecY/SEC61-alpha family. In terms of assembly, component of the Sec protein translocase complex. Heterotrimer consisting of alpha (SecY), beta (SecG) and gamma (SecE) subunits. The heterotrimers can form oligomers, although 1 heterotrimer is thought to be able to translocate proteins. Interacts with the ribosome. May interact with SecDF, and other proteins may be involved.

It localises to the cell membrane. Functionally, the central subunit of the protein translocation channel SecYEG. Consists of two halves formed by TMs 1-5 and 6-10. These two domains form a lateral gate at the front which open onto the bilayer between TMs 2 and 7, and are clamped together by SecE at the back. The channel is closed by both a pore ring composed of hydrophobic SecY resides and a short helix (helix 2A) on the extracellular side of the membrane which forms a plug. The plug probably moves laterally to allow the channel to open. The ring and the pore may move independently. The sequence is that of Protein translocase subunit SecY from Archaeoglobus fulgidus (strain ATCC 49558 / DSM 4304 / JCM 9628 / NBRC 100126 / VC-16).